A 62-amino-acid chain; its full sequence is Translational regulator CsrA (62 aa).

Belongs to the CsrA/RsmA family. In terms of assembly, homodimer; the beta-strands of each monomer intercalate to form a hydrophobic core, while the alpha-helices form wings that extend away from the core.

It localises to the cytoplasm. Its function is as follows. A key translational regulator that binds mRNA to regulate translation initiation and/or mRNA stability. Mediates global changes in gene expression, shifting from rapid growth to stress survival by linking envelope stress, the stringent response and the catabolite repression systems. Usually binds in the 5'-UTR; binding at or near the Shine-Dalgarno sequence prevents ribosome-binding, repressing translation, binding elsewhere in the 5'-UTR can activate translation and/or stabilize the mRNA. Its function is antagonized by small RNA(s). In Pasteurella multocida (strain Pm70), this protein is Translational regulator CsrA.